Reading from the N-terminus, the 96-residue chain is Co-chaperonin GroES (96 aa).

Belongs to the GroES chaperonin family. In terms of assembly, heptamer of 7 subunits arranged in a ring. Interacts with the chaperonin GroEL.

The protein resides in the cytoplasm. Together with the chaperonin GroEL, plays an essential role in assisting protein folding. The GroEL-GroES system forms a nano-cage that allows encapsulation of the non-native substrate proteins and provides a physical environment optimized to promote and accelerate protein folding. GroES binds to the apical surface of the GroEL ring, thereby capping the opening of the GroEL channel. The chain is Co-chaperonin GroES from Allochromatium vinosum (Chromatium vinosum).